The sequence spans 278 residues: Sulfur carrier protein FdhD (278 aa).

The Cysteine persulfide intermediate role is filled by cysteine 121. A Mo-bis(molybdopterin guanine dinucleotide)-binding site is contributed by 260-265 (FCKPGR).

The protein belongs to the FdhD family.

The protein resides in the cytoplasm. Required for formate dehydrogenase (FDH) activity. Acts as a sulfur carrier protein that transfers sulfur from IscS to the molybdenum cofactor prior to its insertion into FDH. The chain is Sulfur carrier protein FdhD from Salmonella heidelberg (strain SL476).